The sequence spans 728 residues: Methylmalonyl-CoA mutase large subunit (728 aa).

(R)-methylmalonyl-CoA contacts are provided by Y75, M78, R82, T85, R87, Y89, and S114. Cob(II)alamin is bound by residues F117 and A139. 2 residues coordinate (R)-methylmalonyl-CoA: T195 and Q197. Cob(II)alamin-binding residues include V206 and R207. Residues R207, H244, R283, and S285 each contribute to the (R)-methylmalonyl-CoA site. Cob(II)alamin-binding residues include G333, E370, A373, G609, H610, D611, R612, S655, L657, G686, and T709. Residues 597-728 (RPRILLAKMG…VKKLRASLDA (132 aa)) form the B12-binding domain.

The protein belongs to the methylmalonyl-CoA mutase family. Heterodimer of an alpha and a beta chain. Requires adenosylcob(III)alamin as cofactor.

It catalyses the reaction (R)-methylmalonyl-CoA = succinyl-CoA. Functionally, catalyzes the reversible conversion of succinyl-CoA to (R)-methylmalonyl-CoA through a radical mechanism. Is involved in the fermentation of pyruvate to propanoate that occurs in Propionibacteria. The polypeptide is Methylmalonyl-CoA mutase large subunit (mutB) (Propionibacterium freudenreichii subsp. shermanii).